Reading from the N-terminus, the 477-residue chain is Oxidative stress-induced growth inhibitor 1 (477 aa).

A Phosphoserine modification is found at Ser12.

It belongs to the OKL38 family. Requires NADPH as cofactor. In terms of tissue distribution, ubiquitous. Highest expression in the ovary, testis, kidney, skeletal muscle and liver.

Its subcellular location is the midbody. Functionally, monooxygenase catalytic activity. Involved in regulation of cytokinesis; promotes RHOA activity, probably acting locally at the midbody in late cytokinesis. Monooxygenase activity is involved in stabilizing transient structures between daughter cells, termed intercellular bridges, before abscission. Regulates differentiation and proliferation through the regulation of cell death. In Homo sapiens (Human), this protein is Oxidative stress-induced growth inhibitor 1.